The following is a 273-amino-acid chain: uncharacterized protein (273 aa).

One can recognise an AB hydrolase-1 domain in the interval 29–131 (TLVCVHGFLS…VVLLCSSGYL (103 aa)). Active-site residues include serine 102 and histidine 254.

It belongs to the DmpD/TodF/XylF esterase family.

This is an uncharacterized protein from Bacillus subtilis (strain 168).